Here is a 154-residue protein sequence, read N- to C-terminus: 6,7-dimethyl-8-ribityllumazine synthase (154 aa).

5-amino-6-(D-ribitylamino)uracil contacts are provided by residues phenylalanine 21, 55–57, and 79–81; these read AFE and CVI. 84 to 85 contributes to the (2S)-2-hydroxy-3-oxobutyl phosphate binding site; the sequence is AT. Histidine 87 (proton donor) is an active-site residue. Phenylalanine 111 serves as a coordination point for 5-amino-6-(D-ribitylamino)uracil. Arginine 125 lines the (2S)-2-hydroxy-3-oxobutyl phosphate pocket.

This sequence belongs to the DMRL synthase family. In terms of assembly, forms an icosahedral capsid composed of 60 subunits, arranged as a dodecamer of pentamers.

It catalyses the reaction (2S)-2-hydroxy-3-oxobutyl phosphate + 5-amino-6-(D-ribitylamino)uracil = 6,7-dimethyl-8-(1-D-ribityl)lumazine + phosphate + 2 H2O + H(+). It functions in the pathway cofactor biosynthesis; riboflavin biosynthesis; riboflavin from 2-hydroxy-3-oxobutyl phosphate and 5-amino-6-(D-ribitylamino)uracil: step 1/2. In terms of biological role, catalyzes the formation of 6,7-dimethyl-8-ribityllumazine by condensation of 5-amino-6-(D-ribitylamino)uracil with 3,4-dihydroxy-2-butanone 4-phosphate. This is the penultimate step in the biosynthesis of riboflavin. The protein is 6,7-dimethyl-8-ribityllumazine synthase of Macrococcus caseolyticus (strain JCSC5402) (Macrococcoides caseolyticum).